The chain runs to 236 residues: tRNA (guanine-N(7)-)-methyltransferase (236 aa).

Residues D35, E60, N87, and D113 each contribute to the S-adenosyl-L-methionine site. Residue D113 is part of the active site. Substrate is bound by residues K117 and D149.

It belongs to the class I-like SAM-binding methyltransferase superfamily. TrmB family.

The enzyme catalyses guanosine(46) in tRNA + S-adenosyl-L-methionine = N(7)-methylguanosine(46) in tRNA + S-adenosyl-L-homocysteine. It participates in tRNA modification; N(7)-methylguanine-tRNA biosynthesis. Functionally, catalyzes the formation of N(7)-methylguanine at position 46 (m7G46) in tRNA. The polypeptide is tRNA (guanine-N(7)-)-methyltransferase (Parasynechococcus marenigrum (strain WH8102)).